The following is a 179-amino-acid chain: IMPACT family member in pol 5'region (179 aa).

This sequence belongs to the IMPACT family.

This is IMPACT family member in pol 5'region from Thermus thermophilus.